We begin with the raw amino-acid sequence, 248 residues long: Killer cell lectin-like receptor subfamily I member 2 (248 aa).

Residues 1 to 79 lie on the Cytoplasmic side of the membrane; that stretch reads MHKKKHIKHG…GIDPWLTTWQ (79 aa). The segment at 19 to 44 is disordered; it reads IGTKSPTFQEKQRPSKTDQRSTVWRE. Positions 28–44 are enriched in basic and acidic residues; it reads EKQRPSKTDQRSTVWRE. A helical; Signal-anchor for type II membrane protein transmembrane segment spans residues 80-100; the sequence is MITVILATLCIILVTKVGFLI. Residues 101 to 248 are Extracellular-facing; sequence PSLFSKGEKQ…KKTYICEFNI (148 aa). 3 cysteine pairs are disulfide-bonded: Cys132/Cys145, Cys161/Cys244, and Cys223/Cys236. The C-type lectin domain maps to 139–245; that stretch reads FGNNFYCVFR…CSAKKTYICE (107 aa). N-linked (GlcNAc...) asparagine glycosylation is found at Asn197, Asn214, and Asn220.

Heterodimer with KLRE1. As to expression, expressed in natural killer (NK) cells.

The protein resides in the cell membrane. Its function is as follows. Lectin-like receptor for natural killer (NK) cells. Heterodimer formation with KLRE1 mediates NK cell cytolytic activity. This chain is Killer cell lectin-like receptor subfamily I member 2, found in Mus musculus (Mouse).